The sequence spans 131 residues: Small ribosomal subunit protein uS8 (131 aa).

The protein belongs to the universal ribosomal protein uS8 family. As to quaternary structure, part of the 30S ribosomal subunit. Contacts proteins S5 and S12.

Functionally, one of the primary rRNA binding proteins, it binds directly to 16S rRNA central domain where it helps coordinate assembly of the platform of the 30S subunit. The sequence is that of Small ribosomal subunit protein uS8 from Polaromonas sp. (strain JS666 / ATCC BAA-500).